The following is a 250-amino-acid chain: MDPIGINKVLDHLAPSELIKPVKSCHNKPSVLVLDDRIVDAATKDLYVNGFQEEIQYQNPTPENLQHMFHQGIEILDSARMINVTHLALWKPSSFKLGNPVDFALDDNYDTFWQSDGGQPHQLDIMFSKRMDICVMAIFFSMIADESYAPSLVKVYAGHSPSDARFYKMLEVRNVNGWVALRFLDNREDDQLLKCQFIRLLFPVNHENGKDTHLRGIRLYVPSNEPHQDTHEWAQTLPETNNVFQDAILR.

Residues 60–246 form the DOC domain; the sequence is PTPENLQHMF…LPETNNVFQD (187 aa).

Belongs to the APC10 family. In terms of assembly, the APC/C is composed of at least 13 subunits that stay tightly associated throughout the cell cycle: APC1, APC2, APC4, APC5, APC9, APC11, CDC16, CDC23, CDC26, CDC27, DOC1, MND2 and SWM1.

It is found in the cytoplasm. It localises to the nucleus. It participates in protein modification; protein ubiquitination. In terms of biological role, component of the anaphase promoting complex/cyclosome (APC/C), a cell cycle-regulated E3 ubiquitin-protein ligase complex that controls progression through mitosis and the G1 phase of the cell cycle. The APC/C is thought to confer substrate specificity and, in the presence of ubiquitin-conjugating E2 enzymes, it catalyzes the formation of protein-ubiquitin conjugates that are subsequently degraded by the 26S proteasome. In early mitosis, the APC/C is activated by CDC20 and targets securin PDS1, the B-type cyclin CLB5, and other anaphase inhibitory proteins for proteolysis, thereby triggering the separation of sister chromatids at the metaphase-to-anaphase transition. In late mitosis and in G1, degradation of CLB5 allows activation of the APC/C by CDH1, which is needed to destroy CDC20 and the B-type cyclin CLB2 to allow exit from mitosis and creating the low CDK state necessary for cytokinesis and for reforming prereplicative complexes in G1 prior to another round of replication. DOC1 is required, together with the coactivators CDH1 and CDC20, for recognition and binding of the substrates. This Saccharomyces cerevisiae (strain ATCC 204508 / S288c) (Baker's yeast) protein is Anaphase-promoting complex subunit DOC1 (DOC1).